We begin with the raw amino-acid sequence, 188 residues long: CXXC-type zinc finger protein 4 (188 aa).

Residues 1–20 are disordered; that stretch reads MHRNDSQRLGKPGGAPESLQ. The segment at 122-163 adopts a CXXC-type zinc-finger fold; it reads AKKKRKRCGVCVPCKRLINCGVCSSCRNRKTGHQICKFRKCE. 8 residues coordinate Zn(2+): Cys-129, Cys-132, Cys-135, Cys-141, Cys-144, Cys-147, Cys-157, and Cys-162.

It localises to the cytoplasm. Its function is as follows. Acts as a negative regulator of the Wnt signaling pathway required for anterior neural structure formation. Binds preferentially to DNA containing cytidine-phosphate-guanosine (CpG) dinucleotides over CpH (H=A, T, and C), hemimethylated-CpG and hemimethylated-hydroxymethyl-CpG. This is CXXC-type zinc finger protein 4 (cxxc4) from Xenopus tropicalis (Western clawed frog).